Here is a 269-residue protein sequence, read N- to C-terminus: Chymotrypsin-like elastase family member 2B (269 aa).

Positions 1 to 16 are cleaved as a signal peptide; that stretch reads MIRTLLLSTLVAGALS. Residues 17–28 constitute a propeptide, activation peptide; sequence CGVSTYAPDMSR. The Peptidase S1 domain maps to 29 to 267; sequence MLGGEEARPN…YNDWINSVIA (239 aa). Cysteines 58 and 74 form a disulfide. Catalysis depends on charge relay system residues H73 and D121. Intrachain disulfides connect C155/C222, C186/C202, and C212/C243. S216 serves as the catalytic Charge relay system.

Belongs to the peptidase S1 family. Elastase subfamily. In terms of tissue distribution, pancreas.

The protein localises to the secreted. The catalysed reaction is Preferential cleavage: Leu-|-Xaa, Met-|-Xaa and Phe-|-Xaa. Hydrolyzes elastin.. Acts upon elastin. This is Chymotrypsin-like elastase family member 2B (CELA2B) from Homo sapiens (Human).